We begin with the raw amino-acid sequence, 565 residues long: NAD-dependent malic enzyme (565 aa).

Y104 acts as the Proton donor in catalysis. R157 lines the NAD(+) pocket. Residue K175 is the Proton acceptor of the active site. The a divalent metal cation site is built by E246, D247, and D270. Positions 270 and 418 each coordinate NAD(+).

It belongs to the malic enzymes family. As to quaternary structure, homotetramer. Mg(2+) serves as cofactor. It depends on Mn(2+) as a cofactor.

It carries out the reaction (S)-malate + NAD(+) = pyruvate + CO2 + NADH. The catalysed reaction is oxaloacetate + H(+) = pyruvate + CO2. In Enterobacter sp. (strain 638), this protein is NAD-dependent malic enzyme.